The sequence spans 380 residues: Cytochrome b (380 aa).

Helical transmembrane passes span 34–54 (FGSL…LLAT), 78–99 (WLIR…YLHI), 114–134 (WNTG…GYVL), and 179–199 (FFAL…IHLT). The heme b site is built by His-84 and His-98. His-183 and His-197 together coordinate heme b. A ubiquinone is bound at residue His-202. Transmembrane regions (helical) follow at residues 227 to 247 (LKDI…ALFS), 289 to 309 (LGGV…PLLH), 321 to 341 (LSQL…WVGS), and 348 to 368 (FIII…ILFP).

The protein belongs to the cytochrome b family. As to quaternary structure, the cytochrome bc1 complex contains 11 subunits: 3 respiratory subunits (MT-CYB, CYC1 and UQCRFS1), 2 core proteins (UQCRC1 and UQCRC2) and 6 low-molecular weight proteins (UQCRH/QCR6, UQCRB/QCR7, UQCRQ/QCR8, UQCR10/QCR9, UQCR11/QCR10 and a cleavage product of UQCRFS1). This cytochrome bc1 complex then forms a dimer. Heme b serves as cofactor.

The protein resides in the mitochondrion inner membrane. Component of the ubiquinol-cytochrome c reductase complex (complex III or cytochrome b-c1 complex) that is part of the mitochondrial respiratory chain. The b-c1 complex mediates electron transfer from ubiquinol to cytochrome c. Contributes to the generation of a proton gradient across the mitochondrial membrane that is then used for ATP synthesis. This chain is Cytochrome b (MT-CYB), found in Ciconia ciconia (White stork).